The following is a 210-amino-acid chain: Germin-like protein subfamily 3 member 4 (210 aa).

The first 18 residues, 1 to 18 (MKFFVVIVFCAIFLSVSG), serve as a signal peptide directing secretion. A disulfide bond links C27 and C44. The Cupin type-1 domain occupies 58-190 (TKLTEAGDTD…VFGIDQEHIK (133 aa)). N73 carries N-linked (GlcNAc...) asparagine glycosylation. Residues H106, H108, E113, and H152 each contribute to the Mn(2+) site.

Belongs to the germin family. As to quaternary structure, oligomer (believed to be a pentamer but probably hexamer).

It is found in the secreted. Its subcellular location is the extracellular space. The protein localises to the apoplast. Its function is as follows. May play a role in plant defense. Probably has no oxalate oxidase activity even if the active site is conserved. This Arabidopsis thaliana (Mouse-ear cress) protein is Germin-like protein subfamily 3 member 4.